We begin with the raw amino-acid sequence, 385 residues long: Glutamate 5-kinase (385 aa).

Residue lysine 18 coordinates ATP. Residues serine 57, aspartate 144, and asparagine 156 each coordinate substrate. 218-224 (TGGMKSK) provides a ligand contact to ATP. Residues 283–361 (RGVLSIDAGA…SRIEQVLGHK (79 aa)) form the PUA domain.

This sequence belongs to the glutamate 5-kinase family.

It localises to the cytoplasm. The catalysed reaction is L-glutamate + ATP = L-glutamyl 5-phosphate + ADP. It functions in the pathway amino-acid biosynthesis; L-proline biosynthesis; L-glutamate 5-semialdehyde from L-glutamate: step 1/2. Functionally, catalyzes the transfer of a phosphate group to glutamate to form L-glutamate 5-phosphate. This chain is Glutamate 5-kinase, found in Syntrophus aciditrophicus (strain SB).